A 235-amino-acid polypeptide reads, in one-letter code: H2HPP isomerase (235 aa).

Cupin type-2 domains follow at residues 41–106 and 151–216; these read VPPH…AIDI and KIPG…KSIN. Residues His-50, His-52, Gln-56, His-91, His-162, His-164, Gln-168, and His-202 each contribute to the a divalent metal cation site. Tyr-223 contacts substrate.

Monomer. Requires Fe(2+) as cofactor. It depends on Co(2+) as a cofactor.

It is found in the cytoplasm. It carries out the reaction 3-[(4R)-4-hydroxycyclohexa-1,5-dien-1-yl]-2-oxopropanoate = 3-[(1E,4R)-4-hydroxycyclohex-2-en-1-ylidene]pyruvate. The protein operates within antibiotic biosynthesis; bacilysin biosynthesis. Functionally, part of the bacABCDEF operon responsible for the biosynthesis of the nonribosomally synthesized dipeptide antibiotic bacilysin, composed of L-alanine and L-anticapsin. Bacilysin is an irreversible inactivator of the glutaminase domain of glucosamine synthetase. BacB catalyzes the allylic isomerization of the endocyclic-delta(4),delta(8)-7R-dihydro-hydroxyphenylpyruvate (en-H2HPP) to generate a mixture of 3E,7R- and 3Z, 7R-olefins (E/Z ration of 3/1) of the exocyclic-delta(3),delta(5)-dihydro-hydroxyphenylpyruvate (ex-H2HPP). This Bacillus subtilis (strain 168) protein is H2HPP isomerase.